The sequence spans 138 residues: ATP synthase epsilon chain (138 aa).

It belongs to the ATPase epsilon chain family. F-type ATPases have 2 components, CF(1) - the catalytic core - and CF(0) - the membrane proton channel. CF(1) has five subunits: alpha(3), beta(3), gamma(1), delta(1), epsilon(1). CF(0) has three main subunits: a, b and c.

The protein localises to the cell inner membrane. In terms of biological role, produces ATP from ADP in the presence of a proton gradient across the membrane. The protein is ATP synthase epsilon chain of Geobacter metallireducens (strain ATCC 53774 / DSM 7210 / GS-15).